We begin with the raw amino-acid sequence, 461 residues long: MLKIFNTLSRQKEEFKPIHAGQVGMYVCGITVYDLCHIGHGRTFVAFDVVARYLRYLGYSLKYVRNVTDIDDKIIKRAAENGETSDQLTTRMIAEMHADFDALNILRPDAEPRATHHITDIIEMVETLIARRHAYVASNGDVMFSVDTAPGYGVLSRQDLDQLQAGARVEITEVKRNPMDFVLWKMSKPGEPHWSSPWGEGRPGWHIECSAMNCKQLGEHFDIHGGGSDLMFPHHENEIAQSSCAHDGPYVNYWMHSGMVMVDREKMSKSLNNFFTVRDVLAYYDPETVRYFLMSGHYRSQLNYSEDNLKQARAALERLYTALRGTDPDAAAQGGDEFEGRFREAMDDDFNTPEAYSVLFDMAREVNRLKTEDAQAANQLASALRKLSGVLGLLEQDPEQFLQNGAQVDNDEVKEIEALIQQRKDARAAKDWALADQARDRLNEMGIVLEDGPQGTIWRRK.

Cys-28 serves as a coordination point for Zn(2+). Residues 30 to 40 (ITVYDLCHIGH) carry the 'HIGH' region motif. 3 residues coordinate Zn(2+): Cys-209, His-234, and Glu-238. The 'KMSKS' region signature appears at 266–270 (KMSKS). Lys-269 serves as a coordination point for ATP.

This sequence belongs to the class-I aminoacyl-tRNA synthetase family. In terms of assembly, monomer. Requires Zn(2+) as cofactor.

It is found in the cytoplasm. The catalysed reaction is tRNA(Cys) + L-cysteine + ATP = L-cysteinyl-tRNA(Cys) + AMP + diphosphate. This Pectobacterium carotovorum subsp. carotovorum (strain PC1) protein is Cysteine--tRNA ligase.